Consider the following 124-residue polypeptide: Predicted GPI-anchored protein 11 (124 aa).

Residues 1 to 18 (MKFQFVTALALASTMAVA) form the signal peptide. Residues 38–59 (REGGSTGAELQDNNQPTAGLFG) form a disordered region. The GPI-anchor amidated serine moiety is linked to residue Ser107. Positions 108–124 (GAAGGVGNLFSGILGGL) are cleaved as a propeptide — removed in mature form.

It is found in the cell membrane. The sequence is that of Predicted GPI-anchored protein 11 (PGA11) from Candida albicans (strain SC5314 / ATCC MYA-2876) (Yeast).